A 453-amino-acid polypeptide reads, in one-letter code: C4-dicarboxylate TRAP transporter large permease protein DctM (453 aa).

A run of 13 helical transmembrane segments spans residues 2–22 (AVAL…PIAI), 50–70 (AFAG…STFM), 82–102 (FAIA…VVAC), 104–124 (MFAA…SIVI), 139–159 (GVIC…VMVV), 172–192 (FLGG…AIYI), 217–237 (ASWG…GIFT), 243–263 (AVAA…MGPF), 289–309 (LYDA…ALIL), 326–346 (MLSA…ILLV), 356–376 (LLVI…IDPI), 380–400 (IMMV…LNLF), and 417–437 (ALPW…VPWV).

The protein belongs to the TRAP transporter large permease family. In terms of assembly, the complex comprises the extracytoplasmic solute receptor protein DctP, and the two transmembrane proteins DctQ and DctM.

It localises to the cell inner membrane. Part of the tripartite ATP-independent periplasmic (TRAP) transport system DctPQM involved in C4-dicarboxylates uptake. The sequence is that of C4-dicarboxylate TRAP transporter large permease protein DctM from Vibrio cholerae serotype O1 (strain ATCC 39315 / El Tor Inaba N16961).